Here is a 601-residue protein sequence, read N- to C-terminus: Nuclear receptor subfamily 2 group C member 1 (601 aa).

Positions 1–179 are required for interaction with KAT2B; sequence MATIEEIAHQ…RLQRCIAFGM (179 aa). A DNA-binding region (nuclear receptor) is located at residues 111–186; the sequence is FDLCVVCGDK…FGMKQDSVQC (76 aa). 2 NR C4-type zinc fingers span residues 114–134 and 150–169; these read CVVCGDKASGRHYGAVTCEGC and CRGSKDCIINKHHRNRCQYC. Phosphoserine occurs at positions 198 and 216. Phosphothreonine is present on T221. T223 is subject to Phosphothreonine; by MAPK1. K251 participates in a covalent cross-link: Glycyl lysine isopeptide (Lys-Gly) (interchain with G-Cter in SUMO); alternate. A Glycyl lysine isopeptide (Lys-Gly) (interchain with G-Cter in SUMO2); alternate cross-link involves residue K251. An NR LBD domain is found at 349–591; that stretch reads GSVHLITGDS…SVIPHILKME (243 aa). At S582 the chain carries Phosphoserine; by PKC. The tract at residues 585 to 601 is required for interaction with NRIP1; it reads PHILKMEPGQYSKTSSL. K589 participates in a covalent cross-link: Glycyl lysine isopeptide (Lys-Gly) (interchain with G-Cter in SUMO2).

This sequence belongs to the nuclear hormone receptor family. NR2 subfamily. In terms of assembly, homodimer. Heterodimer; with NR2C2 which is required for chromatin remodeling and for binding to promoter regions such as globin DR1 repeats. Interacts with ESR1; the interaction prevents homodimerization of ESR1 and suppresses its transcriptional activity and cell growth. Interacts with NRIP1 (via its LXXLL motifs); the interaction provides corepressor activity. Interacts with HDAC3 (via the DNA-binding domain); the interaction recruits phosphorylated NR2C1 to PML bodies for sumoylation. Interacts with HDAC4 (via the DNA-binding domain). Interacts with PIAS1; the interaction is required for sumoylation of NR2C1. Interacts with UBE2I; the interaction is required for sumoylation of NR2C1. Interacts with KAT2B; the interaction acts as a corepressor of gene expression. Post-translationally, sumoylation requires both PIAS1 and UBE2I. Sumoylation appears to dissociate NR2C1 from the PML nuclear bodies. Enhances the interaction with NRIP1 but inhibits interaction with KAT2B. In proliferating cells, stimulation by all-trans retinoic acid, activation of MAPK1-mediated phosphorylation and recruitment to PML bodies with subsequent sumoylation, suppresses OCT4 expression. In terms of processing, phosphorylated on several serine and threonine residues. Phosphorylation on Thr-223, stimulated by all-trans retinoic acid (atRA) mediates PML location and sumoylation in proliferating cells which then modulates its association with effector molecules, KAT2B and NRIP1. Phosphorylation on Ser-582 by PKC is important for protein stability and function as activator of RARB.

The protein resides in the nucleus. Its subcellular location is the PML body. In terms of biological role, orphan nuclear receptor. Binds the IR7 element in the promoter of its own gene in an autoregulatory negative feedback mechanism. Primarily repressor of a broad range of genes including ESR1 and RARB. Together with NR2C2, forms the core of the DRED (direct repeat erythroid-definitive) complex that represses embryonic and fetal globin transcription. Binds to hormone response elements (HREs) consisting of two 5'-AGGTCA-3' half site direct repeat consensus sequences. Also activator of OCT4 gene expression. Plays a fundamental role in early embryogenesis and regulates embryonic stem cell proliferation and differentiation. Mediator of retinoic acid-regulated preadipocyte proliferation. The polypeptide is Nuclear receptor subfamily 2 group C member 1 (NR2C1) (Pongo abelii (Sumatran orangutan)).